Reading from the N-terminus, the 605-residue chain is Replication protein E1 (605 aa).

Residues 76-78 (KRK) carry the Nuclear localization signal motif. A phosphoserine; by host mark is found at Ser-81 and Ser-89. A Nuclear export signal motif is present at residues 88 to 97 (LSPRLESISL). The DNA-binding region stretch occupies residues 145–308 (HLGTVDIHYT…TIVGHQSTEA (164 aa)). Positions 407–557 (VNVIMFLAAL…FPMKPDNTPE (151 aa)) constitute an SF3 helicase domain. 433 to 440 (GPPNTGKS) is a binding site for ATP. Residue Lys-514 forms a Glycyl lysine isopeptide (Lys-Gly) (interchain with G-Cter in SUMO) linkage. The disordered stretch occupies residues 580 to 605 (DQEDEGENGESQQAFQCSARSANEHL). The span at 588–605 (GESQQAFQCSARSANEHL) shows a compositional bias: polar residues.

Belongs to the papillomaviridae E1 protein family. As to quaternary structure, can form hexamers. Interacts with E2 protein; this interaction increases E1 DNA binding specificity. Interacts with host DNA polymerase subunit POLA2. Interacts with host single stranded DNA-binding protein RPA1. Interacts with host TOP1; this interaction stimulates the enzymatic activity of TOP1. In terms of processing, phosphorylated. Sumoylated.

The protein resides in the host nucleus. The enzyme catalyses Couples ATP hydrolysis with the unwinding of duplex DNA by translocating in the 3'-5' direction.. The catalysed reaction is ATP + H2O = ADP + phosphate + H(+). In terms of biological role, ATP-dependent DNA 3'-5' helicase required for initiation of viral DNA replication. It forms a complex with the viral E2 protein. The E1-E2 complex binds to the replication origin which contains binding sites for both proteins. During the initial step, a dimer of E1 interacts with a dimer of protein E2 leading to a complex that binds the viral origin of replication with high specificity. Then, a second dimer of E1 displaces the E2 dimer in an ATP-dependent manner to form the E1 tetramer. Following this, two E1 monomers are added to each half of the site, which results in the formation of two E1 trimers on the viral ori. Subsequently, two hexamers will be created. The double hexamer acts as a bi-directional helicase machinery and unwinds the viral DNA and then recruits the host DNA polymerase to start replication. This Homo sapiens (Human) protein is Replication protein E1.